A 147-amino-acid chain; its full sequence is Nucleoside diphosphate kinase (147 aa).

ATP-binding residues include Lys9, Phe57, Arg85, Thr91, Arg102, and Asn112. His115 serves as the catalytic Pros-phosphohistidine intermediate.

Belongs to the NDK family. It depends on Mg(2+) as a cofactor.

The protein localises to the cytoplasm. It catalyses the reaction a 2'-deoxyribonucleoside 5'-diphosphate + ATP = a 2'-deoxyribonucleoside 5'-triphosphate + ADP. It carries out the reaction a ribonucleoside 5'-diphosphate + ATP = a ribonucleoside 5'-triphosphate + ADP. Its function is as follows. Major role in the synthesis of nucleoside triphosphates other than ATP. The ATP gamma phosphate is transferred to the NDP beta phosphate via a ping-pong mechanism, using a phosphorylated active-site intermediate. The sequence is that of Nucleoside diphosphate kinase from Ignicoccus hospitalis (strain KIN4/I / DSM 18386 / JCM 14125).